Here is a 575-residue protein sequence, read N- to C-terminus: Major outer membrane protein MspA (575 aa).

The first 19 residues, 1–19 (MKKALVFFVALAMIGSVFA), serve as a signal peptide directing secretion.

It is found in the cell outer membrane. Functionally, major component of the outer membrane sheath. The chain is Major outer membrane protein MspA (mspA) from Treponema maltophilum.